Consider the following 261-residue polypeptide: Glucosamine-6-phosphate deaminase (261 aa).

Catalysis depends on Asp67, which acts as the Proton acceptor; for enolization step. The active-site For ring-opening step is Asn136. The Proton acceptor; for ring-opening step role is filled by His138. Glu143 serves as the catalytic For ring-opening step.

The protein belongs to the glucosamine/galactosamine-6-phosphate isomerase family. NagB subfamily.

The enzyme catalyses alpha-D-glucosamine 6-phosphate + H2O = beta-D-fructose 6-phosphate + NH4(+). Its pathway is amino-sugar metabolism; N-acetylneuraminate degradation; D-fructose 6-phosphate from N-acetylneuraminate: step 5/5. In terms of biological role, catalyzes the reversible isomerization-deamination of glucosamine 6-phosphate (GlcN6P) to form fructose 6-phosphate (Fru6P) and ammonium ion. The sequence is that of Glucosamine-6-phosphate deaminase from Cutibacterium acnes (strain DSM 16379 / KPA171202) (Propionibacterium acnes).